A 57-amino-acid polypeptide reads, in one-letter code: DNA-directed RNA polymerase subunit Rpo6 (57 aa).

The protein belongs to the archaeal Rpo6/eukaryotic RPB6 RNA polymerase subunit family. In terms of assembly, part of the RNA polymerase complex.

The protein localises to the cytoplasm. It catalyses the reaction RNA(n) + a ribonucleoside 5'-triphosphate = RNA(n+1) + diphosphate. Functionally, DNA-dependent RNA polymerase (RNAP) catalyzes the transcription of DNA into RNA using the four ribonucleoside triphosphates as substrates. The chain is DNA-directed RNA polymerase subunit Rpo6 from Methanocaldococcus jannaschii (strain ATCC 43067 / DSM 2661 / JAL-1 / JCM 10045 / NBRC 100440) (Methanococcus jannaschii).